Reading from the N-terminus, the 31-residue chain is Cyclotide psybry A (31 aa).

Positions 1 to 31 (GFNPCGETCIWFPTCHAPGCTCSIANICVRN) form a cross-link, cyclopeptide (Gly-Asn). Intrachain disulfides connect Cys5–Cys20, Cys9–Cys22, and Cys15–Cys28.

In terms of processing, this is a cyclic peptide.

Probably participates in a plant defense mechanism. The polypeptide is Cyclotide psybry A (Psychotria brachyceras).